A 202-amino-acid chain; its full sequence is Sterile alpha motif domain-containing protein 10 (202 aa).

Residues 1-22 form a disordered region; sequence MFTELRSKLSPPRARAGAVRPG. The SAM domain occupies 118–184; sequence WSQQDVCKWL…LQQVLHLQVR (67 aa).

The sequence is that of Sterile alpha motif domain-containing protein 10 from Mus musculus (Mouse).